We begin with the raw amino-acid sequence, 692 residues long: MAREIALDHVRNIGIMAHIDAGKTTVTERILYYTGRSHKIGEVHEGAATMDWMEQEQERGITITSAATTCFWKEHRINIIDTPGHVDFTIEVERSLRVLDGAVAVFCGVAGVQPQSETVWRQADRYGVPRLAFVNKMDRMGADFNKAVQTMKDRLKARAIPAQYPIGAEEDLRGMVDLITRKAYIFNDESLGAEFEVLDCPEDIEAEVEEAREALLEAALEQDDTLMEKYLEGEEITIAEFKSCMRRAVISSAFVPVFCGSAFKNKGVQLLLDAVVDYFPSPSDTPYIEGLLPDSEEAAVRKPSDEEPFAALAFKIMTDPFVGTLTFVRVYSGVMESGTSVLNASKDRKERIGRLMLMHANKREDIKEVRAGDICAVVGLKNTTTGETLCDPNKPIILEKMDFPAPVIAIAVEPKTKADQERMGVALQRLAQEDPSFRVEVDHETNQTIISGMGELHLEIIVDRMMREFKVDANVGQPQVAYRETITQMVEHESKFVRQSGGRGQFGHVWLRLEPNEPGAGYEFVDGIKGGVVPKEYIPAVKNGVGEAMANGVYVGFPMVDVKVTLFDGSYHEVDSSEMAFKIAGSMGLKEGAMKAKPVLLEPIMDVEVETPEDYMGDVMGDMNSRRGQIQGMEDSGNNRLVKAQVPLSGMFGYATDLRSMSQGRATFTMQFGHYAQVPKSIAEEIKAKTTG.

In terms of domain architecture, tr-type G spans 8 to 283; it reads DHVRNIGIMA…AVVDYFPSPS (276 aa). GTP is bound by residues 17–24, 81–85, and 135–138; these read AHIDAGKT, DTPGH, and NKMD.

Belongs to the TRAFAC class translation factor GTPase superfamily. Classic translation factor GTPase family. EF-G/EF-2 subfamily.

The protein resides in the cytoplasm. In terms of biological role, catalyzes the GTP-dependent ribosomal translocation step during translation elongation. During this step, the ribosome changes from the pre-translocational (PRE) to the post-translocational (POST) state as the newly formed A-site-bound peptidyl-tRNA and P-site-bound deacylated tRNA move to the P and E sites, respectively. Catalyzes the coordinated movement of the two tRNA molecules, the mRNA and conformational changes in the ribosome. The polypeptide is Elongation factor G (Magnetococcus marinus (strain ATCC BAA-1437 / JCM 17883 / MC-1)).